The primary structure comprises 151 residues: Ribosome maturation factor RimP (151 aa).

Belongs to the RimP family.

It localises to the cytoplasm. In terms of biological role, required for maturation of 30S ribosomal subunits. The chain is Ribosome maturation factor RimP from Shewanella amazonensis (strain ATCC BAA-1098 / SB2B).